The following is a 2053-amino-acid chain: Integrator complex subunit 1 (2053 aa).

Disordered stretches follow at residues 36–58 and 249–285; these read KILP…ALAS and SLPS…ESEP. A compositionally biased stretch (polar residues) spans 268-283; the sequence is DNSTQSLDASPLNTES. Residues 708-728 form a helical membrane-spanning segment; that stretch reads LAIIAFYWKAWLILLMISAHN.

Belongs to the Integrator subunit 1 family. In terms of assembly, belongs to the multiprotein complex Integrator, at least composed of IntS1, IntS2, IntS3, IntS4, omd/IntS5, IntS6, defl/IntS7, IntS8, IntS9, IntS10, IntS11, IntS12, asun/IntS13, IntS14 and IntS15. The core complex associates with protein phosphatase 2A subunits mts/PP2A and Pp2A-29B, to form the Integrator-PP2A (INTAC) complex. Within the complex, interacts with IntS12 and IntS9. Interaction with IntS12 is likely to be important for promoting 3'-end processing of snRNAs. Interacts with Mediator complex members Cdk8 and CycC.

The protein localises to the nucleus membrane. The protein resides in the nucleus. Its function is as follows. Component of the integrator complex, a multiprotein complex that terminates RNA polymerase II (Pol II) transcription in the promoter-proximal region of genes. The integrator complex provides a quality checkpoint during transcription elongation by driving premature transcription termination of transcripts that are unfavorably configured for transcriptional elongation: the complex terminates transcription by (1) catalyzing dephosphorylation of the C-terminal domain (CTD) of Pol II subunit Polr2A/Rbp1 and Spt5, and (2) degrading the exiting nascent RNA transcript via endonuclease activity. The integrator complex is also involved in the 3'-end processing of the U7 snRNA, and also the spliceosomal snRNAs U1, U2, U4 and U5. Required for the normal expression of the Integrator complex component IntS12. The sequence is that of Integrator complex subunit 1 from Drosophila melanogaster (Fruit fly).